The primary structure comprises 98 residues: Cystatin-B (98 aa).

At Met1 the chain carries N-acetylmethionine. The Secondary area of contact motif lies at 46-50 (QLVAG).

The protein belongs to the cystatin family. In terms of assembly, able to form dimers stabilized by noncovalent forces.

The protein resides in the cytoplasm. This is an intracellular thiol proteinase inhibitor. This Ovis aries (Sheep) protein is Cystatin-B (CSTB).